The primary structure comprises 404 residues: Glycosylated lysosomal membrane protein (404 aa).

Positions 1–35 are cleaved as a signal peptide; it reads MFRCWGPHWGWVPCAPTPWLLLSLLVCSAPFGLQG. The Lumenal segment spans residues 36-370; the sequence is EETRQVSMEV…VDIFSPLVLG (335 aa). Residues asparagine 64, asparagine 85, asparagine 94, asparagine 133, asparagine 157, asparagine 166, asparagine 185, asparagine 228, and asparagine 331 are each glycosylated (N-linked (GlcNAc...) asparagine). A helical membrane pass occupies residues 371-391; sequence IMAVALGAPGLMFLGGGLFLL. Topologically, residues 392 to 404 are cytoplasmic; that stretch reads LRHRRYSEYQSIN. A Lysosomal targeting motif motif is present at residues 400–404; that stretch reads YQSIN.

This sequence belongs to the GLMP family. As to quaternary structure, interacts (via lumenal domain) with lysosomal protein MFSD1; the interaction starts while both proteins are still in the endoplasmic reticulum and is required for stabilization of MFSD1 in lysosomes but has no direct effect on its targeting to lysosomes or transporter activity. Post-translationally, highly N-glycosylated. N-glycosylation is essential for GLMP stability and for MFSD1 lysosomal localization. In terms of tissue distribution, detected in brain, heart, liver, kidney, lung, intestine, testis and spleen. Expressed at highest levels in kidney cortex. However, another study reports highest expression levels in lung. Expressed in myoblasts with expression increasing during differentiation into myotubes.

It is found in the lysosome membrane. Its function is as follows. Required to protect lysosomal transporter MFSD1 from lysosomal proteolysis and for MFSD1 lysosomal localization. The sequence is that of Glycosylated lysosomal membrane protein from Mus musculus (Mouse).